A 355-amino-acid chain; its full sequence is C-C chemokine receptor type 1 (355 aa).

Residues 1–34 (METPNTTEDYDTTTEFDYGDATPCQKVNERAFGA) are Extracellular-facing. The N-linked (GlcNAc...) asparagine glycan is linked to N5. Disulfide bonds link C24–C273 and C106–C183. Residues 35 to 60 (QLLPPLYSLVFVIGLVGNILVVLVLV) form a helical membrane-spanning segment. At 61 to 64 (QYKR) the chain is on the cytoplasmic side. A helical transmembrane segment spans residues 65–91 (LKNMTSIYLLNLAISDLLFLFTLPFWI). Topologically, residues 92–107 (DYKLKDDWVFGDAMCK) are extracellular. Residues 108–129 (ILSGFYYTGLYSEIFFIILLTI) traverse the membrane as a helical segment. The Cytoplasmic portion of the chain corresponds to 130 to 146 (DRYLAIVHAVFALRART). A helical membrane pass occupies residues 147–171 (VTFGVITSIIIWALAILASMPGLYF). The Extracellular segment spans residues 172–197 (SKTQWEFTHHTCSLHFPHESLREWKL). Residues 198-223 (FQALKLNLFGLVLPLLVMIICYTGII) form a helical membrane-spanning segment. The Cytoplasmic portion of the chain corresponds to 224 to 239 (KILLRRPNEKKSKAVR). Residues 240-264 (LIFVIMIIFFLFWTPYNLTILISVF) traverse the membrane as a helical segment. Residues 265-281 (QDFLFTHECEQSRHLDL) are Extracellular-facing. Residues 282–305 (AVQVTEVIAYTHCCVNPVIYAFVG) form a helical membrane-spanning segment. Over 306 to 355 (ERFRKYLRQLFHRRVAVHLVKWLPFLSVDRLERVSSTSPSTGEHELSAGF) the chain is Cytoplasmic.

The protein belongs to the G-protein coupled receptor 1 family. In terms of assembly, interacts with CREB3. Interacts with CCL3. Interacts with CCL15. Interacts with CCL23. Interacts with GNAI1. Interacts with PF4/CXCL4. As to expression, widely expressed in different hematopoietic cells.

The protein resides in the cell membrane. Chemokine receptor that plays a crucial role in regulating immune cell migration, inflammation, and immune responses. Contributes to the inflammatory response by recruiting immune cells, such as monocytes, macrophages, T-cells, and dendritic cells, to sites of inflammation for the clearance of pathogens and the resolution of tissue damage. When activated by its ligands including CCL3, CCL5-9, CCL13-16 and CCL23, triggers a signaling cascade within immune cells, leading to their migration towards the source of the chemokine. For example, mediates neutrophil migration after activation by CCL3 leading to the sequential release of TNF-alpha and leukotriene B4. Also mediates monocyte migration upon CXCL4 binding. Activation by CCL5 results in neuroinflammation through the ERK1/2 signaling pathway. The polypeptide is C-C chemokine receptor type 1 (CCR1) (Homo sapiens (Human)).